Consider the following 314-residue polypeptide: tRNA dimethylallyltransferase 2 (314 aa).

ATP is bound at residue 8–15 (GPTGSGKS). 10 to 15 (TGSGKS) lines the substrate pocket.

It belongs to the IPP transferase family. As to quaternary structure, monomer. Requires Mg(2+) as cofactor.

It carries out the reaction adenosine(37) in tRNA + dimethylallyl diphosphate = N(6)-dimethylallyladenosine(37) in tRNA + diphosphate. Its function is as follows. Catalyzes the transfer of a dimethylallyl group onto the adenine at position 37 in tRNAs that read codons beginning with uridine, leading to the formation of N6-(dimethylallyl)adenosine (i(6)A). This Mycobacterium marinum (strain ATCC BAA-535 / M) protein is tRNA dimethylallyltransferase 2.